A 458-amino-acid chain; its full sequence is Bifunctional protein GlmU (458 aa).

The segment at 1–232 (MISPLSVIIL…TFEIEGVNNR (232 aa)) is pyrophosphorylase. UDP-N-acetyl-alpha-D-glucosamine contacts are provided by residues 10–13 (LAAG), K24, Q79, 84–85 (GT), 106–108 (YGD), G142, E157, N172, and N230. Residue D108 coordinates Mg(2+). Mg(2+) is bound at residue N230. The linker stretch occupies residues 233–253 (QQLASLERTWQGKLVADLQEA). The N-acetyltransferase stretch occupies residues 254–458 (GVQFADPTRV…KDNFQRPTKK (205 aa)). Residues R336 and K354 each coordinate UDP-N-acetyl-alpha-D-glucosamine. H366 (proton acceptor) is an active-site residue. Residues Y369 and N380 each coordinate UDP-N-acetyl-alpha-D-glucosamine. Residues A383, 389-390 (NY), S408, A426, and R443 contribute to the acetyl-CoA site.

This sequence in the N-terminal section; belongs to the N-acetylglucosamine-1-phosphate uridyltransferase family. The protein in the C-terminal section; belongs to the transferase hexapeptide repeat family. As to quaternary structure, homotrimer. The cofactor is Mg(2+).

The protein localises to the cytoplasm. The catalysed reaction is alpha-D-glucosamine 1-phosphate + acetyl-CoA = N-acetyl-alpha-D-glucosamine 1-phosphate + CoA + H(+). The enzyme catalyses N-acetyl-alpha-D-glucosamine 1-phosphate + UTP + H(+) = UDP-N-acetyl-alpha-D-glucosamine + diphosphate. It participates in nucleotide-sugar biosynthesis; UDP-N-acetyl-alpha-D-glucosamine biosynthesis; N-acetyl-alpha-D-glucosamine 1-phosphate from alpha-D-glucosamine 6-phosphate (route II): step 2/2. Its pathway is nucleotide-sugar biosynthesis; UDP-N-acetyl-alpha-D-glucosamine biosynthesis; UDP-N-acetyl-alpha-D-glucosamine from N-acetyl-alpha-D-glucosamine 1-phosphate: step 1/1. The protein operates within bacterial outer membrane biogenesis; LPS lipid A biosynthesis. Its function is as follows. Catalyzes the last two sequential reactions in the de novo biosynthetic pathway for UDP-N-acetylglucosamine (UDP-GlcNAc). The C-terminal domain catalyzes the transfer of acetyl group from acetyl coenzyme A to glucosamine-1-phosphate (GlcN-1-P) to produce N-acetylglucosamine-1-phosphate (GlcNAc-1-P), which is converted into UDP-GlcNAc by the transfer of uridine 5-monophosphate (from uridine 5-triphosphate), a reaction catalyzed by the N-terminal domain. This is Bifunctional protein GlmU from Psychrobacter arcticus (strain DSM 17307 / VKM B-2377 / 273-4).